We begin with the raw amino-acid sequence, 210 residues long: Ribosomal RNA large subunit methyltransferase E (210 aa).

Residues G67, W69, D87, D103, and D128 each contribute to the S-adenosyl-L-methionine site. K168 acts as the Proton acceptor in catalysis.

Belongs to the class I-like SAM-binding methyltransferase superfamily. RNA methyltransferase RlmE family.

Its subcellular location is the cytoplasm. The catalysed reaction is uridine(2552) in 23S rRNA + S-adenosyl-L-methionine = 2'-O-methyluridine(2552) in 23S rRNA + S-adenosyl-L-homocysteine + H(+). Specifically methylates the uridine in position 2552 of 23S rRNA at the 2'-O position of the ribose in the fully assembled 50S ribosomal subunit. The polypeptide is Ribosomal RNA large subunit methyltransferase E (Psychrobacter sp. (strain PRwf-1)).